A 1263-amino-acid polypeptide reads, in one-letter code: MAEPESEKPSSAQGGGLPSSDHPLNPILQRQIELPEIKINYFSLFRYATVKEYALLLISAFFAAVSGAMFPLLILFIGNLVQVLKDFNLGTIPQEQLSEQIRDIALYIVYLFLGQLVSVFIFTNGCLLVGEAITNAIREKYVRSLFRQNIAFFDTYGSGKITSQLTSSTATIQDAISHKIGLFVSACSCFVASYAIGFVKHWKLTFILTSTVVAITGVMIIMSGFMAKFGANSSGALAEASAKLEETFSGIRVVKALGLEKRLSDELDPQLLNIEFWGKRVRHVMGWMLAIMYGLIFLNYGLAIWQGYRFMQGGTEDVGAIITVLMCLNIGAFLFGNVGPHLQAMSLGAAAAQDIFAVIERESVTDGGAPPGSFEVEGNIEFRNVSHVYPSRPDTHVLQDFSMIFPAGKVTAIVGASGSGKSTIVSILERFYEPVSGQVFLDGHDITHLNVQWLRQQFGLVGQEPVLFNGSIFKNVAYGLKGTQYGQESREVTMKLVTEACRIANAHDFITALPHGYDQEVGIRGASLSGGQRQRIAIARAIVSGPKILLLDEATSALDVQSEEAVQLGLNMASSGRTTIVVAHSLSTIKLADNIIVMEKGRVAQQGTHAELEAQEGLYQTFVRRQQLKQATLEPPHARITPAVDTPASPQHRLSEKTGSIYGQGESEAADKSPSTKYSFVQLVKFVARFNKEDWRLMVTGIASAVISGAVWPAHSVFFAKAIVALSSPSPASLARGPNFWAAMYVMLAFVQIASQGVQGSAFAICAERLILRARRVAFKYLLRQDVEFFDDPLHSSGIMTSFVSSDVNALAGLSGVFLGTLFSATATVLGGLILSLAVGWKLTLVTMGTIPIIIVAGYVRLKLVGTLEKISRKVHEESAGRVCEEINAVRTVAASCLEDEMCEDYVRSLKSKEKTYLRATLWSSGWYALSEAVPLGCMSLGFWYGATLVMRTEYTTEQFFIVVTAVIFGASSAGLVFAFAPDFGKAGVSAERLQELVDRQPEVDTWSEEGDHIETTNGKVDVSNVVFYYNQRSKTPVLNSISLGAAPGQSIGLCGGSGSGKSTVASLLERFYNPSSGTVSLDEKDVRTININSYRAQFALVNQEPLLFSCSIRENLLYGSLGKDLTDSEIEEACKMAQVYDFVCSLPEGLDTSFGSNAVMLSGGQRQRLSIARAILRKPRVLILDEATSALDSTSERAVIEALTKTAEGRTTIMVAHRLSTIQGCDKIFYLRAGAVAEEGTHEELMAKRGSYYDSVNLQSLG.

The segment at 1 to 21 (MAEPESEKPSSAQGGGLPSSD) is disordered. The next 4 membrane-spanning stretches (helical) occupy residues 57–77 (LISAFFAAVSGAMFPLLILFI), 104–124 (IALYIVYLFLGQLVSVFIFTN), 179–199 (KIGLFVSACSCFVASYAIGFV), and 206–226 (FILTSTVVAITGVMIIMSGFM). Residues 57-347 (LISAFFAAVS…VGPHLQAMSL (291 aa)) form the ABC transmembrane type-1 1 domain. An N-linked (GlcNAc...) asparagine glycan is attached at Asn-232. A run of 2 helical transmembrane segments spans residues 284–304 (VMGWMLAIMYGLIFLNYGLAI) and 318–338 (VGAIITVLMCLNIGAFLFGNV). The ABC transporter 1 domain occupies 380-625 (IEFRNVSHVY…EGLYQTFVRR (246 aa)). The N-linked (GlcNAc...) asparagine glycan is linked to Asn-384. Position 415 to 422 (415 to 422 (GASGSGKS)) interacts with ATP. The N-linked (GlcNAc...) asparagine glycan is linked to Asn-469. Positions 635–672 (PPHARITPAVDTPASPQHRLSEKTGSIYGQGESEAADK) are disordered. Transmembrane regions (helical) follow at residues 699 to 719 (VTGIASAVISGAVWPAHSVFF), 740 to 760 (FWAAMYVMLAFVQIASQGVQG), 817 to 839 (VFLGTLFSATATVLGGLILSLAV), 843 to 865 (LTLVTMGTIPIIIVAGYVRLKLV), 930 to 950 (LSEAVPLGCMSLGFWYGATLV), and 960 to 980 (FFIVVTAVIFGASSAGLVFAF). The ABC transmembrane type-1 2 domain maps to 699–986 (VTGIASAVIS…VFAFAPDFGK (288 aa)). The ABC transporter 2 domain maps to 1021 to 1259 (VDVSNVVFYY…RGSYYDSVNL (239 aa)). 1056 to 1063 (GGSGSGKS) contributes to the ATP binding site.

This sequence belongs to the ABC transporter superfamily. ABCB family. Multidrug resistance exporter (TC 3.A.1.201) subfamily.

It is found in the cell membrane. The catalysed reaction is ATP + H2O + xenobioticSide 1 = ADP + phosphate + xenobioticSide 2.. Its function is as follows. Sirodesmin transporter that provides the dual role of sirodesmin export and self-protection. Also provides tolerance to gliotoxin. The sequence is that of Multidrug resistance protein sirA from Leptosphaeria maculans (Blackleg fungus).